Here is a 207-residue protein sequence, read N- to C-terminus: uncharacterized protein (207 aa).

Active-site residues include Arg80, Glu88, and Arg148.

Belongs to the thermonuclease family.

This is an uncharacterized protein from Methanocaldococcus jannaschii (strain ATCC 43067 / DSM 2661 / JAL-1 / JCM 10045 / NBRC 100440) (Methanococcus jannaschii).